The chain runs to 438 residues: MALRGVSVRLLSRGPGLHVLRTWVSSAAQTEKGGRTQSQLAKSSRPEFDWQDPLVLEEQLTTDEILIRDTFRTYCQERLMPRILLANRNEVFHREIISEMGELGVLGPTIKGYGCAGVSSVAYGLLARELERVDSGYRSAMSVQSSLVMHPIYAYGSEEQRQKYLPQLAKGELLGCFGLTEPNSGSDPSSMETRAHYNSSNKSYTLNGTKTWITNSPMADLFVVWARCEDGCIRGFLLEKGMRGLSAPRIQGKFSLRASATGMIIMDGVEVPEENVLPGASSLGGPFGCLNNARYGIAWGVLGASEFCLHTARQYALDRMQFGVPLARNQLIQKKLADMLTEITLGLHACLQLGRLKDQDKAAPEMVSLLKRNNCGKALDIARQARDMLGGNGISDEYHVIRHAMNLEAVNTYEGTHDIHALILGRAITGIQAFTASK.

The N-terminal 44 residues, 1-44, are a transit peptide targeting the mitochondrion; it reads MALRGVSVRLLSRGPGLHVLRTWVSSAAQTEKGGRTQSQLAKSS. Substrate contacts are provided by residues 138 to 139 and Ser-186; that span reads RS. FAD contacts are provided by residues 177-186 and 212-214; these read FGLTEPNSGS and WIT. Position 240 is an N6-acetyllysine (Lys-240). Position 287-294 (287-294) interacts with substrate; the sequence is FGCLNNAR. Residues Arg-319, Gln-330, and 387 to 391 contribute to the FAD site; that span reads DMLGG. Residue Glu-414 is the Proton acceptor of the active site. A substrate-binding site is contributed by Gly-415. FAD-binding positions include 416–418 and Phe-434; that span reads THD.

The protein belongs to the acyl-CoA dehydrogenase family. In terms of assembly, homotetramer. Requires FAD as cofactor. As to expression, isoform Long and isoform Short are expressed in fibroblasts and liver.

The protein resides in the mitochondrion matrix. It catalyses the reaction glutaryl-CoA + oxidized [electron-transfer flavoprotein] + 2 H(+) = (2E)-butenoyl-CoA + reduced [electron-transfer flavoprotein] + CO2. The protein operates within amino-acid metabolism; lysine degradation. Its pathway is amino-acid metabolism; tryptophan metabolism. Its activity is regulated as follows. Strongly inhibited by MCPA-CoA, a metabolite of hypoglycin which is present in unripened fruit of the ackee tree. Its function is as follows. Catalyzes the oxidative decarboxylation of glutaryl-CoA to crotonyl-CoA and CO(2) in the degradative pathway of L-lysine, L-hydroxylysine, and L-tryptophan metabolism. It uses electron transfer flavoprotein as its electron acceptor. Isoform Short is inactive. The chain is Glutaryl-CoA dehydrogenase, mitochondrial (GCDH) from Homo sapiens (Human).